The chain runs to 369 residues: Cobalt-precorrin-5B C(1)-methyltransferase (369 aa).

It belongs to the CbiD family.

The catalysed reaction is Co-precorrin-5B + S-adenosyl-L-methionine = Co-precorrin-6A + S-adenosyl-L-homocysteine. It functions in the pathway cofactor biosynthesis; adenosylcobalamin biosynthesis; cob(II)yrinate a,c-diamide from sirohydrochlorin (anaerobic route): step 6/10. Catalyzes the methylation of C-1 in cobalt-precorrin-5B to form cobalt-precorrin-6A. This Geobacter metallireducens (strain ATCC 53774 / DSM 7210 / GS-15) protein is Cobalt-precorrin-5B C(1)-methyltransferase.